The chain runs to 346 residues: Uroporphyrinogen decarboxylase (346 aa).

Substrate contacts are provided by residues 26 to 30 (RQAGR), Asp76, Tyr153, Ser208, and His323.

The protein belongs to the uroporphyrinogen decarboxylase family. In terms of assembly, homodimer.

It is found in the cytoplasm. The enzyme catalyses uroporphyrinogen III + 4 H(+) = coproporphyrinogen III + 4 CO2. The protein operates within porphyrin-containing compound metabolism; protoporphyrin-IX biosynthesis; coproporphyrinogen-III from 5-aminolevulinate: step 4/4. Catalyzes the decarboxylation of four acetate groups of uroporphyrinogen-III to yield coproporphyrinogen-III. This Prochlorococcus marinus (strain MIT 9515) protein is Uroporphyrinogen decarboxylase.